Reading from the N-terminus, the 955-residue chain is 2-oxoglutarate dehydrogenase E1 component (955 aa).

It belongs to the alpha-ketoglutarate dehydrogenase family. As to quaternary structure, homodimer. Part of the 2-oxoglutarate dehydrogenase (OGDH) complex composed of E1 (2-oxoglutarate dehydrogenase), E2 (dihydrolipoamide succinyltransferase) and E3 (dihydrolipoamide dehydrogenase); the complex contains multiple copies of the three enzymatic components (E1, E2 and E3). Thiamine diphosphate is required as a cofactor.

The enzyme catalyses N(6)-[(R)-lipoyl]-L-lysyl-[protein] + 2-oxoglutarate + H(+) = N(6)-[(R)-S(8)-succinyldihydrolipoyl]-L-lysyl-[protein] + CO2. Its function is as follows. E1 component of the 2-oxoglutarate dehydrogenase (OGDH) complex which catalyzes the decarboxylation of 2-oxoglutarate, the first step in the conversion of 2-oxoglutarate to succinyl-CoA and CO(2). The polypeptide is 2-oxoglutarate dehydrogenase E1 component (Bacillus cereus (strain G9842)).